The chain runs to 611 residues: Large ribosomal subunit assembly factor BipA (611 aa).

The 196-residue stretch at 7-202 folds into the tr-type G domain; the sequence is KNLRNIAIIA…AIVKYTPPPT (196 aa). GTP contacts are provided by residues 19 to 24 and 132 to 135; these read DHGKTT and NKID.

This sequence belongs to the TRAFAC class translation factor GTPase superfamily. Classic translation factor GTPase family. BipA subfamily. In terms of assembly, monomer.

The protein localises to the cytoplasm. It catalyses the reaction GTP + H2O = GDP + phosphate + H(+). Its function is as follows. A 50S ribosomal subunit assembly protein with GTPase activity, required for 50S subunit assembly at low temperatures, may also play a role in translation. Binds GTP and analogs. Binds the 70S ribosome between the 30S and 50S subunits, in a similar position as ribosome-bound EF-G; it contacts a number of ribosomal proteins, both rRNAs and the A-site tRNA. The polypeptide is Large ribosomal subunit assembly factor BipA (Buchnera aphidicola subsp. Baizongia pistaciae (strain Bp)).